Here is a 694-residue protein sequence, read N- to C-terminus: Putative ankyrin repeat protein RBE_0921 (694 aa).

ANK repeat units lie at residues 122–151 (LGKT…NINV), 155–185 (NGRN…NINS), 216–245 (FNRT…NVEA), 249–275 (TGET…NTEA), 279–317 (LGRT…NPNA), 321–350 (YGFT…KFKK), 351–382 (NRYE…NIND), 384–413 (NGQN…DNGK), 423–452 (QRNT…DINA), and 456–485 (DGET…DINI).

In Rickettsia bellii (strain RML369-C), this protein is Putative ankyrin repeat protein RBE_0921.